Reading from the N-terminus, the 392-residue chain is Formate-dependent phosphoribosylglycinamide formyltransferase (392 aa).

Residues 22-23 (EL) and glutamate 82 contribute to the N(1)-(5-phospho-beta-D-ribosyl)glycinamide site. ATP-binding positions include arginine 114, lysine 155, 160–165 (SSGKGQ), 195–198 (EGVV), and glutamate 203. One can recognise an ATP-grasp domain in the interval 119-308 (RLAAEELGLP…EFALHVRAFL (190 aa)). Mg(2+)-binding residues include glutamate 267 and glutamate 279. N(1)-(5-phospho-beta-D-ribosyl)glycinamide contacts are provided by residues aspartate 286, lysine 355, and 362 to 363 (RR).

The protein belongs to the PurK/PurT family. In terms of assembly, homodimer.

The catalysed reaction is N(1)-(5-phospho-beta-D-ribosyl)glycinamide + formate + ATP = N(2)-formyl-N(1)-(5-phospho-beta-D-ribosyl)glycinamide + ADP + phosphate + H(+). It functions in the pathway purine metabolism; IMP biosynthesis via de novo pathway; N(2)-formyl-N(1)-(5-phospho-D-ribosyl)glycinamide from N(1)-(5-phospho-D-ribosyl)glycinamide (formate route): step 1/1. Functionally, involved in the de novo purine biosynthesis. Catalyzes the transfer of formate to 5-phospho-ribosyl-glycinamide (GAR), producing 5-phospho-ribosyl-N-formylglycinamide (FGAR). Formate is provided by PurU via hydrolysis of 10-formyl-tetrahydrofolate. This chain is Formate-dependent phosphoribosylglycinamide formyltransferase, found in Salmonella typhimurium (strain LT2 / SGSC1412 / ATCC 700720).